Reading from the N-terminus, the 450-residue chain is MPRTEMVRFVRLPVVLLAMAACLASVALGSLHVEESLEMRFAAFKKKYGKVYKDAKEEAFRFRAFEENMEQAKIQAAANPYATFGVTPFSDMTREEFRARYRNGASYFAAAQKRLRKTVNVTTGRAPAAVDWREKGAVTPVKVQGQCGSCWAFSTIGNIEGQWQVAGNPLVSLSEQMLVSCDTIDSGCNGGLMDNAFNWIVNSNGGNVFTEASYPYVSGNGEQPQCQMNGHEIGAAITDHVDLPQDEDAIAAYLAENGPLAIAVDAESFMDYNGGILTSCTSKQLDHGVLLVGYNDNSNPPYWIIKNSWSNMWGEDGYIRIEKGTNQCLMNQAVSSAVVGGPTPPPPPPPPPSATFTQDFCEGKGCTKGCSHATFPTGECVQTTGVGSVIATCGASNLTQIIYPLSRSCSGPSVPITVPLDKCIPILIGSVEYHCSTNPPTKAARLVPHQ.

The N-terminal stretch at 1-20 (MPRTEMVRFVRLPVVLLAMA) is a signal peptide. A propeptide spans 21 to 125 (ACLASVALGS…RKTVNVTTGR (105 aa)) (activation peptide). The N-linked (GlcNAc...) asparagine glycan is linked to asparagine 120. A disulfide bridge connects residues cysteine 147 and cysteine 188. Residues cysteine 150, histidine 287, and asparagine 307 contribute to the active site. The 108-residue extension stretch occupies residues 343–450 (TPPPPPPPPP…TKAARLVPHQ (108 aa)). Asparagine 397 carries an N-linked (GlcNAc...) asparagine glycan.

It belongs to the peptidase C1 family.

The protein resides in the lysosome. Its function is as follows. The cysteine proteinases have a potential role in host-parasite interaction and virulence. The chain is Cysteine proteinase from Trypanosoma brucei brucei.